The chain runs to 382 residues: Transcription factor MYB104 (382 aa).

2 consecutive HTH myb-type domains span residues 13–69 (KKTF…KPSL) and 70–120 (KKGP…MRLK). 2 consecutive DNA-binding regions (H-T-H motif) follow at residues 41–65 (WTHVPKRTGLPHNPASCRFRWMNHL) and 93–116 (WSQMAREFPGRTDNEIKNFWNARR). The tract at residues 326–364 (IPKTDTSSESQLFQSSLRSHTDATPDIANTTGYVGSNER) is disordered. 2 stretches are compositionally biased toward polar residues: residues 329–343 (TDTSSESQLFQSSLR) and 352–364 (IANTTGYVGSNER).

The protein localises to the nucleus. This chain is Transcription factor MYB104 (MYB104), found in Arabidopsis thaliana (Mouse-ear cress).